We begin with the raw amino-acid sequence, 528 residues long: Pentatricopeptide repeat-containing protein At1g62914, mitochondrial (528 aa).

The transit peptide at 1 to 20 (MLAKISSSAKRFVHRSLVVR) directs the protein to the mitochondrion. 13 PPR repeats span residues 77–111 (SIIE…GISH), 112–146 (NLYT…GYEP), 147–181 (DIVT…GYKP), 182–216 (DTVT…GCQP), 217–251 (DLVT…KIEA), 252–286 (NVVI…GVRP), 287–321 (NVIT…KINP), 322–356 (NLVT…SIDP), 357–391 (NIFT…DCLP), 392–426 (NVVT…GLVG), 427–461 (NTVT…GVHP), 462–496 (NILT…TMEP), and 497–528 (DIYT…ALKE).

It belongs to the PPR family. P subfamily.

It is found in the mitochondrion. This chain is Pentatricopeptide repeat-containing protein At1g62914, mitochondrial, found in Arabidopsis thaliana (Mouse-ear cress).